The chain runs to 174 residues: MTSQQIDAEALYQSLVAQLRTRMAGTPAGDWSVAGIVSGGAWIAARLALDLGLREYGIVNVALHRDDYAKKGLHAQAQPTTLPFEVEERRILLVDDVLATGRTIRAAINELFDYGRPAAVELAVLVDRGERQLPIAPDYIGERIALAADESLVLRQEGEGASARFTFTREPKTA.

Residues 38–39, 95–103, and Arg-128 contribute to the substrate site; these read SG and DDVLATGRT. The short motif at 91-103 is the PRPP-binding element; sequence ILLVDDVLATGRT.

The protein belongs to the purine/pyrimidine phosphoribosyltransferase family. PyrR subfamily.

The catalysed reaction is UMP + diphosphate = 5-phospho-alpha-D-ribose 1-diphosphate + uracil. Functionally, regulates the transcription of the pyrimidine nucleotide (pyr) operon in response to exogenous pyrimidines. In terms of biological role, also displays a weak uracil phosphoribosyltransferase activity which is not physiologically significant. The chain is Bifunctional protein PyrR from Ralstonia nicotianae (strain ATCC BAA-1114 / GMI1000) (Ralstonia solanacearum).